The following is a 313-amino-acid chain: Probable cytochrome c oxidase subunit 2 (313 aa).

The RPE1 insert domain maps to 5–51 (RYWSKQSYKKLKVDQEHNTTEYTNVCNSTSLGSTYTLPLKMELWKIY). A run of 3 helical transmembrane segments spans residues 39–59 (YTLP…YFLI), 94–114 (LLYI…FVCI), and 131–151 (LLIE…IAVP). Residues H233, C268, C272, and H276 each contribute to the Cu cation site.

Belongs to the cytochrome c oxidase subunit 2 family. Cu cation serves as cofactor. Requires heme as cofactor.

The protein localises to the cell membrane. It catalyses the reaction 4 Fe(II)-[cytochrome c] + O2 + 8 H(+)(in) = 4 Fe(III)-[cytochrome c] + 2 H2O + 4 H(+)(out). Functionally, subunits I and II form the functional core of the enzyme complex. Electrons originating in cytochrome c are transferred via heme a and Cu(A) to the binuclear center formed by heme a3 and Cu(B). In Rickettsia prowazekii (strain Madrid E), this protein is Probable cytochrome c oxidase subunit 2 (ctaC).